We begin with the raw amino-acid sequence, 431 residues long: Bifunctional protein GlmU (431 aa).

A pyrophosphorylase region spans residues 1–223 (MNLSIVILAA…EENFKGVNSK (223 aa)). UDP-N-acetyl-alpha-D-glucosamine is bound by residues 8-11 (LAAG), Lys22, Gln74, and 81-82 (GT). Asp102 provides a ligand contact to Mg(2+). 4 residues coordinate UDP-N-acetyl-alpha-D-glucosamine: Gly135, Glu149, Asn164, and Asn221. A Mg(2+)-binding site is contributed by Asn221. Positions 224-244 (ADLAEAEAIMTGRIRRRWMRE) are linker. Positions 245 to 431 (GVRMRLPETI…FFARYFSSSK (187 aa)) are N-acetyltransferase. UDP-N-acetyl-alpha-D-glucosamine-binding residues include Arg308 and Lys325. Residue His336 is the Proton acceptor of the active site. Residues Tyr339 and Asn350 each coordinate UDP-N-acetyl-alpha-D-glucosamine. Acetyl-CoA-binding positions include Ala353, 359-360 (NY), Ser378, Ala396, and Arg413.

In the N-terminal section; belongs to the N-acetylglucosamine-1-phosphate uridyltransferase family. It in the C-terminal section; belongs to the transferase hexapeptide repeat family. As to quaternary structure, homotrimer. Mg(2+) is required as a cofactor.

The protein resides in the cytoplasm. The enzyme catalyses alpha-D-glucosamine 1-phosphate + acetyl-CoA = N-acetyl-alpha-D-glucosamine 1-phosphate + CoA + H(+). It catalyses the reaction N-acetyl-alpha-D-glucosamine 1-phosphate + UTP + H(+) = UDP-N-acetyl-alpha-D-glucosamine + diphosphate. Its pathway is nucleotide-sugar biosynthesis; UDP-N-acetyl-alpha-D-glucosamine biosynthesis; N-acetyl-alpha-D-glucosamine 1-phosphate from alpha-D-glucosamine 6-phosphate (route II): step 2/2. It participates in nucleotide-sugar biosynthesis; UDP-N-acetyl-alpha-D-glucosamine biosynthesis; UDP-N-acetyl-alpha-D-glucosamine from N-acetyl-alpha-D-glucosamine 1-phosphate: step 1/1. It functions in the pathway bacterial outer membrane biogenesis; LPS lipid A biosynthesis. Its function is as follows. Catalyzes the last two sequential reactions in the de novo biosynthetic pathway for UDP-N-acetylglucosamine (UDP-GlcNAc). The C-terminal domain catalyzes the transfer of acetyl group from acetyl coenzyme A to glucosamine-1-phosphate (GlcN-1-P) to produce N-acetylglucosamine-1-phosphate (GlcNAc-1-P), which is converted into UDP-GlcNAc by the transfer of uridine 5-monophosphate (from uridine 5-triphosphate), a reaction catalyzed by the N-terminal domain. The chain is Bifunctional protein GlmU from Wolinella succinogenes (strain ATCC 29543 / DSM 1740 / CCUG 13145 / JCM 31913 / LMG 7466 / NCTC 11488 / FDC 602W) (Vibrio succinogenes).